The sequence spans 452 residues: Elongation factor Tu, mitochondrial (452 aa).

Residues Met1–Leu43 constitute a mitochondrion transit peptide. A tr-type G domain is found at Lys55–Thr251. The interval Gly64–Thr71 is G1. The GTP site is built by Asp67, Gly69, Lys70, Thr71, and Thr72. Thr71 is a Mg(2+) binding site. An N6-acetyllysine modification is found at Lys79. Lys88 is modified (N6-acetyllysine; alternate). The residue at position 88 (Lys88) is an N6-succinyllysine; alternate. The G2 stretch occupies residues Gly105 to Asn109. A G3 region spans residues Asp126 to Gly129. 5 residues coordinate GTP: Asn181, Asp184, Ser219, Ala220, and Leu221. A G4 region spans residues Asn181–Asp184. The segment at Ser219–Leu221 is G5. Lys234 carries the post-translational modification N6-succinyllysine. Lys256 is modified (N6-acetyllysine). Thr278 is modified (phosphothreonine). Position 286 is an N6-succinyllysine (Lys286). The residue at position 312 (Ser312) is a Phosphoserine. N6-acetyllysine is present on residues Lys361 and Lys418.

It belongs to the TRAFAC class translation factor GTPase superfamily. Classic translation factor GTPase family. EF-Tu/EF-1A subfamily. Interacts with NLRX1. Interacts with ATG16L1.

It is found in the mitochondrion. It catalyses the reaction GTP + H2O = GDP + phosphate + H(+). Its function is as follows. GTP hydrolase that promotes the GTP-dependent binding of aminoacyl-tRNA to the A-site of ribosomes during protein biosynthesis. Also plays a role in the regulation of autophagy and innate immunity. Recruits ATG5-ATG12 and NLRX1 at mitochondria and serves as a checkpoint of the RIGI-MAVS pathway. In turn, inhibits RLR-mediated type I interferon while promoting autophagy. The chain is Elongation factor Tu, mitochondrial (TUFM) from Bos taurus (Bovine).